A 644-amino-acid polypeptide reads, in one-letter code: Exoribonuclease 2 (644 aa).

One can recognise an RNB domain in the interval Arg-189 to Lys-516. An S1 motif domain is found at Asp-561–Val-643.

Belongs to the RNR ribonuclease family. RNase II subfamily.

It is found in the cytoplasm. It catalyses the reaction Exonucleolytic cleavage in the 3'- to 5'-direction to yield nucleoside 5'-phosphates.. In terms of biological role, involved in mRNA degradation. Hydrolyzes single-stranded polyribonucleotides processively in the 3' to 5' direction. In Cronobacter sakazakii (strain ATCC BAA-894) (Enterobacter sakazakii), this protein is Exoribonuclease 2.